The sequence spans 626 residues: Phosphomethylpyrimidine synthase (626 aa).

Residues 1-22 (MTKQEKAINLSESAQVDQQSVQ) form a disordered region. Residues 10–22 (LSESAQVDQQSVQ) show a composition bias toward polar residues. Substrate is bound by residues asparagine 232, methionine 261, tyrosine 290, histidine 326, 346-348 (SRG), 387-390 (DGLR), and glutamate 426. Position 430 (histidine 430) interacts with Zn(2+). Position 453 (tyrosine 453) interacts with substrate. Residue histidine 494 participates in Zn(2+) binding. Cysteine 574, cysteine 577, and cysteine 582 together coordinate [4Fe-4S] cluster.

Belongs to the ThiC family. Homodimer. [4Fe-4S] cluster is required as a cofactor.

It catalyses the reaction 5-amino-1-(5-phospho-beta-D-ribosyl)imidazole + S-adenosyl-L-methionine = 4-amino-2-methyl-5-(phosphooxymethyl)pyrimidine + CO + 5'-deoxyadenosine + formate + L-methionine + 3 H(+). It participates in cofactor biosynthesis; thiamine diphosphate biosynthesis. Catalyzes the synthesis of the hydroxymethylpyrimidine phosphate (HMP-P) moiety of thiamine from aminoimidazole ribotide (AIR) in a radical S-adenosyl-L-methionine (SAM)-dependent reaction. The sequence is that of Phosphomethylpyrimidine synthase from Pseudomonas putida (strain ATCC 47054 / DSM 6125 / CFBP 8728 / NCIMB 11950 / KT2440).